A 151-amino-acid polypeptide reads, in one-letter code: Class I hydrophobin A (151 aa).

Residues 1–17 (MQFSVAAVLALATAVAA) form the signal peptide. 4 disulfides stabilise this stretch: Cys-52–Cys-125, Cys-60–Cys-119, Cys-61–Cys-101, and Cys-126–Cys-144.

The protein belongs to the fungal hydrophobin family. As to quaternary structure, interacts with cutinase cutL1 in a pH-dependent manner. Self-assembles to form functional amyloid fibrils called rodlets. Self-assembly into fibrillar rodlets occurs spontaneously at hydrophobic:hydrophilic interfaces and the rodlets further associate laterally to form amphipathic monolayers. rolA rodlet formation is regulated by the strength of ionic interactions between rolA molecules. Three types of self-assembled structures of rolA are observed: spherical, rod-like, and mesh-like.

The protein resides in the secreted. It localises to the cell wall. Functionally, aerial growth, conidiation, and dispersal of filamentous fungi in the environment rely upon a capability of their secreting small amphipathic proteins called hydrophobins (HPBs) with low sequence identity. Class I can self-assemble into an outermost layer of rodlet bundles on aerial cell surfaces, conferring cellular hydrophobicity that supports fungal growth, development and dispersal; whereas Class II form highly ordered films at water-air interfaces through intermolecular interactions but contribute nothing to the rodlet structure. RolA is a class I hydrophobin that undergoes a conformational change after its adsorption to hydrophobic surfaces such as the biodegradable polyester polybutylene succinate-coadipate (PBSA) and recruits the cutinase cutL1, resulting in condensation of cutL1 on the PBSA surface and consequent stimulation of PBSA hydrolysis. Increases also the activity of polyethylene terephthalate hydrolase (PETase) that hydrolyzes polyethylene terephthalate (PET), one of the most well-known polyesters that is widely used as packaging material, when the PET samples are preincubated with the hydrophobin. The wetting effect of rolA probably acts on PET surface to become hydrophilic, which leads PETase easier to contact and attack the surface. The protein is Class I hydrophobin A of Aspergillus oryzae (strain ATCC 42149 / RIB 40) (Yellow koji mold).